A 226-amino-acid chain; its full sequence is UPF0758 protein PsycPRwf_0491 (226 aa).

The 123-residue stretch at 102–224 (SLNRSQVVKD…TLSFAETATA (123 aa)) folds into the MPN domain. Residues histidine 173, histidine 175, and aspartate 186 each coordinate Zn(2+). Positions 173–186 (HNHPNQDATPSAAD) match the JAMM motif motif.

The protein belongs to the UPF0758 family.

The chain is UPF0758 protein PsycPRwf_0491 from Psychrobacter sp. (strain PRwf-1).